A 691-amino-acid chain; its full sequence is Histone-lysine N-methyltransferase Set8 (691 aa).

Disordered regions lie at residues 1–22 (MIMV…AAAA), 211–234 (RSGL…SATT), 345–381 (PAAG…GDGG), 422–450 (SRRR…QPTN), and 484–516 (APAK…ATNG). Residues 220 to 232 (SSHSSSSSGGASA) are compositionally biased toward low complexity. A compositionally biased stretch (pro residues) spans 431-446 (PQAPYQPQQPQPPPGT). The span at 484-503 (APAKPRAALTKGSKTKTGSK) shows a compositional bias: low complexity. An SET domain is found at 555–676 (EGLQVRNFMG…PGEELTYDYG (122 aa)). Residues 565 to 567 (KGR), Tyr610, and 637 to 638 (NH) each bind S-adenosyl-L-methionine.

The protein belongs to the class V-like SAM-binding methyltransferase superfamily. Histone-lysine methyltransferase family. PR/SET subfamily.

It is found in the nucleus. Its subcellular location is the chromosome. The enzyme catalyses L-lysyl(20)-[histone H4] + S-adenosyl-L-methionine = N(6)-methyl-L-lysyl(20)-[histone H4] + S-adenosyl-L-homocysteine + H(+). Its function is as follows. Histone methyltransferase that specifically monomethylates 'Lys-20' of histone H4. H4 'Lys-20' monomethylation is enriched during mitosis and represents a specific tag for epigenetic transcriptional repression. Mainly functions in euchromatin regions, thereby playing a central role in the silencing of euchromatic genes. Required for cell proliferation, possibly by contributing to the maintenance of proper higher-order structure of DNA and chromosome condensation during mitosis. This chain is Histone-lysine N-methyltransferase Set8, found in Drosophila pseudoobscura pseudoobscura (Fruit fly).